We begin with the raw amino-acid sequence, 334 residues long: Aspartate carbamoyltransferase catalytic subunit (334 aa).

Positions 71 and 72 each coordinate carbamoyl phosphate. Lysine 99 is an L-aspartate binding site. Carbamoyl phosphate contacts are provided by arginine 121, histidine 151, and glutamine 154. L-aspartate contacts are provided by arginine 184 and arginine 239. Carbamoyl phosphate is bound by residues glycine 280 and proline 281.

This sequence belongs to the aspartate/ornithine carbamoyltransferase superfamily. ATCase family. In terms of assembly, heterododecamer (2C3:3R2) of six catalytic PyrB chains organized as two trimers (C3), and six regulatory PyrI chains organized as three dimers (R2).

The catalysed reaction is carbamoyl phosphate + L-aspartate = N-carbamoyl-L-aspartate + phosphate + H(+). It participates in pyrimidine metabolism; UMP biosynthesis via de novo pathway; (S)-dihydroorotate from bicarbonate: step 2/3. Its function is as follows. Catalyzes the condensation of carbamoyl phosphate and aspartate to form carbamoyl aspartate and inorganic phosphate, the committed step in the de novo pyrimidine nucleotide biosynthesis pathway. This is Aspartate carbamoyltransferase catalytic subunit from Pseudomonas fluorescens (strain Pf0-1).